We begin with the raw amino-acid sequence, 271 residues long: MSPLLGLRSELQDTCTSLGLMLSVVLLMGLARVVARQQLHRPVAHAFVLEFLATFQLCCCTHELQLLSEQHPAHPTWTLTLVYFFSLVHGLTLVGTSSNPCGVMMQMMLGGMSPETGAVRLLAQLVSALCSRYCTSALWSLGLTQYHVSERSFACKNPIRVDLLKAVITEAVCSFLFHSALLHFQEVRTKLRIHLLAALITFLVYAGGSLTGAVFNPALALSLHFMCFDEAFPQFFIVYWLAPSLGILLMILMFSFFLPWLHNNHTINKKE.

Residues 1–14 (MSPLLGLRSELQDT) lie on the Cytoplasmic side of the membrane. Residues 15–35 (CTSLGLMLSVVLLMGLARVVA) traverse the membrane as a helical segment. Topologically, residues 36-41 (RQQLHR) are lumenal. The helical transmembrane segment at 42–62 (PVAHAFVLEFLATFQLCCCTH) threads the bilayer. Topologically, residues 63–74 (ELQLLSEQHPAH) are cytoplasmic. The helical transmembrane segment at 75–95 (PTWTLTLVYFFSLVHGLTLVG) threads the bilayer. Over 96–163 (TSSNPCGVMM…ACKNPIRVDL (68 aa)) the chain is Lumenal. The short motif at 99 to 101 (NPC) is the NPC element. The helical transmembrane segment at 164 to 184 (LKAVITEAVCSFLFHSALLHF) threads the bilayer. The Cytoplasmic portion of the chain corresponds to 185–194 (QEVRTKLRIH). Residues 195–215 (LLAALITFLVYAGGSLTGAVF) form a helical membrane-spanning segment. Residues 216 to 218 (NPA) carry the NPA motif. The Lumenal portion of the chain corresponds to 216–234 (NPALALSLHFMCFDEAFPQ). Residues 235 to 255 (FFIVYWLAPSLGILLMILMFS) form a helical membrane-spanning segment. Topologically, residues 256-271 (FFLPWLHNNHTINKKE) are cytoplasmic.

It belongs to the MIP/aquaporin (TC 1.A.8) family. AQP11/AQP12 subfamily. In terms of assembly, homodimer; disulfide-linked. Homotetramer. Can also form homomultimer. Not glycosylated. In terms of tissue distribution, detected in the sperm head and tail (at protein level). Expressed in subcutaneous adipocytes. Expressed in testis, kidney and ejaculated spermatozoa.

The protein resides in the endoplasmic reticulum membrane. It localises to the cytoplasmic vesicle membrane. The protein localises to the cell membrane. The catalysed reaction is H2O(in) = H2O(out). The enzyme catalyses glycerol(in) = glycerol(out). It catalyses the reaction H2O2(out) = H2O2(in). Its function is as follows. Channel protein that facilitates the transport of water, glycerol and hydrogen peroxide across membrane of cell or organelles guaranteeing intracellular homeostasis in several organes like liver, kidney and brain. In situation of stress, participates in endoplasmic reticulum (ER) homeostasis by regulating redox homeostasis through the transport of hydrogen peroxide across the endoplasmic reticulum membrane thereby regulating the oxidative stress through the NADPH oxidase 2 pathway. Plays a role by maintaining an environment suitable for translation or protein foldings in the ER lumen namely by participating in the PKD1 glycosylation processing resulting in regulation of PKD1 membrane trafficking thereby preventing the accumulation of unfolding protein in ER. Plays a role in the proximal tubule function by regulating its endosomal acidification. May play a role in postnatal kidney development. The polypeptide is Aquaporin-11 (Homo sapiens (Human)).